A 418-amino-acid polypeptide reads, in one-letter code: Serine hydroxymethyltransferase (418 aa).

(6S)-5,6,7,8-tetrahydrofolate contacts are provided by residues Leu-121 and 125 to 127 (GHL). An N6-(pyridoxal phosphate)lysine modification is found at Lys-230. 356–358 (SPF) contributes to the (6S)-5,6,7,8-tetrahydrofolate binding site.

The protein belongs to the SHMT family. As to quaternary structure, homodimer. Requires pyridoxal 5'-phosphate as cofactor.

Its subcellular location is the cytoplasm. The catalysed reaction is (6R)-5,10-methylene-5,6,7,8-tetrahydrofolate + glycine + H2O = (6S)-5,6,7,8-tetrahydrofolate + L-serine. It participates in one-carbon metabolism; tetrahydrofolate interconversion. Its pathway is amino-acid biosynthesis; glycine biosynthesis; glycine from L-serine: step 1/1. In terms of biological role, catalyzes the reversible interconversion of serine and glycine with tetrahydrofolate (THF) serving as the one-carbon carrier. This reaction serves as the major source of one-carbon groups required for the biosynthesis of purines, thymidylate, methionine, and other important biomolecules. Also exhibits THF-independent aldolase activity toward beta-hydroxyamino acids, producing glycine and aldehydes, via a retro-aldol mechanism. The protein is Serine hydroxymethyltransferase of Pseudoalteromonas atlantica (strain T6c / ATCC BAA-1087).